Reading from the N-terminus, the 404-residue chain is Probable ketol-acid reductoisomerase, mitochondrial (404 aa).

The KARI N-terminal Rossmann domain occupies 63-253 (TKENVWERSD…AVGSGFIYQT (191 aa)). Residues 91–100 (GYGSQGHGQG), 115–120 (RKDGAS), and 153–157 (SDAAQ) contribute to the NADP(+) site. The active site involves histidine 178. The 148-residue stretch at 254-401 (TFKKEVISDL…EVVRSLRPEH (148 aa)) folds into the KARI C-terminal knotted domain. Serine 261 bears the Phosphoserine mark. Positions 262, 266, 298, and 302 each coordinate Mg(2+). Position 324 (serine 324) interacts with substrate.

The protein belongs to the ketol-acid reductoisomerase family. The cofactor is Mg(2+).

It is found in the mitochondrion. The catalysed reaction is (2R)-2,3-dihydroxy-3-methylbutanoate + NADP(+) = (2S)-2-acetolactate + NADPH + H(+). It carries out the reaction (2R,3R)-2,3-dihydroxy-3-methylpentanoate + NADP(+) = (S)-2-ethyl-2-hydroxy-3-oxobutanoate + NADPH + H(+). Its pathway is amino-acid biosynthesis; L-isoleucine biosynthesis; L-isoleucine from 2-oxobutanoate: step 2/4. It functions in the pathway amino-acid biosynthesis; L-valine biosynthesis; L-valine from pyruvate: step 2/4. This chain is Probable ketol-acid reductoisomerase, mitochondrial (ilv5), found in Schizosaccharomyces pombe (strain 972 / ATCC 24843) (Fission yeast).